The sequence spans 168 residues: Calcium-binding protein 2 (168 aa).

EF-hand domains are found at residues 13–48 (GMEKDLESLFKKYDSDRNGKITYIEIVETLRKAGKK), 48–83 (KNPERIADLLFRDDTDKNGELTIEEAKLRIVRMNDE), 88–123 (VLNWDVEKFINDNDKDGDRKITRDEVLQRFTEQGAE), and 124–159 (DPELITDSIFRQMDLDRDGVITCDEIKEFNRKKKFS). Positions 26, 28, 30, 32, 37, 61, 63, 65, 67, 72, 101, 103, 105, 107, 112, 137, 139, 141, and 148 each coordinate Ca(2+).

Its function is as follows. Not known; probably binds four calcium ions. The sequence is that of Calcium-binding protein 2 (cbp2) from Dictyostelium discoideum (Social amoeba).